Reading from the N-terminus, the 68-residue chain is Probable tautomerase jhp_0858 (68 aa).

P2 functions as the Proton acceptor; via imino nitrogen in the catalytic mechanism.

This sequence belongs to the 4-oxalocrotonate tautomerase family.

The polypeptide is Probable tautomerase jhp_0858 (Helicobacter pylori (strain J99 / ATCC 700824) (Campylobacter pylori J99)).